The following is a 314-amino-acid chain: Protein REGULATOR OF FATTY ACID COMPOSITION 3, chloroplastic (314 aa).

The transit peptide at 1–47 (MESLLHASSSLVSLRPRIDGRDSFINPSRVCLNPSLGRRGSKPLPLV) directs the protein to the chloroplast. Disordered regions lie at residues 49–73 (AAKK…ATGP) and 214–314 (AITE…NVGG). Over residues 56 to 69 (KKDDNHNFSARPDE) the composition is skewed to basic and acidic residues. Composition is skewed to acidic residues over residues 233 to 269 (EYYD…DDDG) and 277 to 294 (GDEE…EQEE). Basic and acidic residues predominate over residues 295-308 (GQDKSTNGRRETRR).

It belongs to the bacterial ribosomal protein bS6 family. As to quaternary structure, interacts with CFM3B/SPRT2 in plastids. In terms of tissue distribution, expressed ubiquitously in roots, leaves, stems, flower buds, flowers and siliques.

Its subcellular location is the plastid. It is found in the chloroplast. In terms of biological role, prevents non-specific action of the splicing factor CFM3b during plastid rRNA biogenesis to improve the accuracy of plastid rRNA processing. Required for plastid functions such as photosynthesis, intracellular distribution, plastid rRNAs biosynthesis and plastid gene expression in roots. Involved in a sucrose-conditional process important for the organization of root lateral and apical meristems (e.g. establishment of RAM from pericycle and symplasmic connectivity), and subsequent primary and lateral roots development. Modulates C18 unsaturated fatty acid metabolism. The polypeptide is Protein REGULATOR OF FATTY ACID COMPOSITION 3, chloroplastic (Arabidopsis thaliana (Mouse-ear cress)).